The sequence spans 275 residues: D-apionate oxidoisomerase (275 aa).

NAD(+) contacts are provided by residues Gly-11–Met-13, Glu-32, and Asp-68. Zn(2+)-binding residues include His-113 and Glu-183.

It belongs to the ApnO family. Zn(2+) is required as a cofactor.

The catalysed reaction is D-apionate + NAD(+) = 3-oxoisoapionate + NADH + H(+). It participates in carbohydrate metabolism. Functionally, involved in catabolism of D-apiose. Catalyzes the conversion of D-apionate to 3-oxo-isoapionate. The polypeptide is D-apionate oxidoisomerase (Rhizobium rhizogenes (strain K84 / ATCC BAA-868) (Agrobacterium radiobacter)).